We begin with the raw amino-acid sequence, 214 residues long: Protein-L-isoaspartate O-methyltransferase (214 aa).

The active site involves Ser-61.

Belongs to the methyltransferase superfamily. L-isoaspartyl/D-aspartyl protein methyltransferase family.

It localises to the cytoplasm. The catalysed reaction is [protein]-L-isoaspartate + S-adenosyl-L-methionine = [protein]-L-isoaspartate alpha-methyl ester + S-adenosyl-L-homocysteine. In terms of biological role, catalyzes the methyl esterification of L-isoaspartyl residues in peptides and proteins that result from spontaneous decomposition of normal L-aspartyl and L-asparaginyl residues. It plays a role in the repair and/or degradation of damaged proteins. This chain is Protein-L-isoaspartate O-methyltransferase, found in Paramagnetospirillum magneticum (strain ATCC 700264 / AMB-1) (Magnetospirillum magneticum).